A 382-amino-acid polypeptide reads, in one-letter code: Mannitol-1-phosphate 5-dehydrogenase (382 aa).

3 to 14 (ALHFGAGNIGRG) contributes to the NAD(+) binding site.

Belongs to the mannitol dehydrogenase family.

It catalyses the reaction D-mannitol 1-phosphate + NAD(+) = beta-D-fructose 6-phosphate + NADH + H(+). This Salmonella paratyphi A (strain ATCC 9150 / SARB42) protein is Mannitol-1-phosphate 5-dehydrogenase.